Reading from the N-terminus, the 267-residue chain is Expansin-B10 (267 aa).

Residues 1-22 form the signal peptide; that stretch reads MASSCLLLACVVAAAMVSAVSC. N-linked (GlcNAc...) asparagine glycosylation occurs at asparagine 32. The Expansin-like EG45 domain occupies 61 to 167; the sequence is GGACGYKDID…RRVRCKYPGE (107 aa). Cystine bridges form between cysteine 64–cysteine 92, cysteine 95–cysteine 162, and cysteine 100–cysteine 106. The 82-residue stretch at 181 to 262 folds into the Expansin-like CBD domain; that stretch reads NYFAVLVKYV…NWKANALYKS (82 aa). Asparagine 213 carries N-linked (GlcNAc...) asparagine glycosylation.

This sequence belongs to the expansin family. Expansin B subfamily.

The protein resides in the secreted. The protein localises to the cell wall. It is found in the membrane. In terms of biological role, may cause loosening and extension of plant cell walls by disrupting non-covalent bonding between cellulose microfibrils and matrix glucans. No enzymatic activity has been found. May be required for rapid internodal elongation in deepwater rice during submergence. This chain is Expansin-B10 (EXPB10), found in Oryza sativa subsp. japonica (Rice).